A 193-amino-acid polypeptide reads, in one-letter code: ATP-dependent Clp protease proteolytic subunit (193 aa).

Ser-98 serves as the catalytic Nucleophile. The active site involves His-123.

The protein belongs to the peptidase S14 family. As to quaternary structure, fourteen ClpP subunits assemble into 2 heptameric rings which stack back to back to give a disk-like structure with a central cavity, resembling the structure of eukaryotic proteasomes.

It localises to the cytoplasm. It carries out the reaction Hydrolysis of proteins to small peptides in the presence of ATP and magnesium. alpha-casein is the usual test substrate. In the absence of ATP, only oligopeptides shorter than five residues are hydrolyzed (such as succinyl-Leu-Tyr-|-NHMec, and Leu-Tyr-Leu-|-Tyr-Trp, in which cleavage of the -Tyr-|-Leu- and -Tyr-|-Trp bonds also occurs).. Cleaves peptides in various proteins in a process that requires ATP hydrolysis. Has a chymotrypsin-like activity. Plays a major role in the degradation of misfolded proteins. This Mannheimia succiniciproducens (strain KCTC 0769BP / MBEL55E) protein is ATP-dependent Clp protease proteolytic subunit.